A 362-amino-acid polypeptide reads, in one-letter code: Outer envelope protein 39, chloroplastic (362 aa).

This sequence belongs to the OEP80 (TC 1.B.33.2) family. In terms of tissue distribution, expressed in germinating seeds. Expressed in the vasculature of roots, cotyledons and leaves.

It is found in the plastid. The protein localises to the chloroplast outer membrane. Its function is as follows. Beta-barrel pore-forming protein which possesses voltage-dependent channel activity. Required for proper plastid development. Involved in the maintenance of metabolic homeostasis of full-grown plants. In Arabidopsis thaliana (Mouse-ear cress), this protein is Outer envelope protein 39, chloroplastic.